Reading from the N-terminus, the 97-residue chain is C-C motif chemokine 8 (97 aa).

Positions 1-23 are cleaved as a signal peptide; the sequence is MKIYAVLLCLLLIAVPVSPEKLT. Intrachain disulfides connect cysteine 32–cysteine 57 and cysteine 33–cysteine 73.

It belongs to the intercrine beta (chemokine CC) family. Monomer or homodimer; in equilibrium.

It localises to the secreted. In terms of biological role, chemotactic factor that attracts monocytes. This protein can bind heparin. This Mus musculus (Mouse) protein is C-C motif chemokine 8 (Ccl8).